Reading from the N-terminus, the 79-residue chain is Large ribosomal subunit protein eL38 (79 aa).

Belongs to the eukaryotic ribosomal protein eL38 family.

The sequence is that of Large ribosomal subunit protein eL38 (RPL38) from Theileria parva (East coast fever infection agent).